We begin with the raw amino-acid sequence, 344 residues long: Plastoglobule-localized metallopeptidase 48, chloroplastic (344 aa).

The transit peptide at 1–47 (MAVSVSAPVLSLCYNQSGELSRSLGYRLPKKVGFSSGRRSVSYIGFG) directs the protein to the chloroplast. 2 consecutive transmembrane segments (helical) span residues 102–122 (LLGS…SVLV) and 169–189 (FIVV…QAVL). His-191 contributes to the Zn(2+) binding site. The active site involves Glu-192. Residue His-195 coordinates Zn(2+). The helical transmembrane segment at 201 to 221 (GVWLTFANILTLGAYTVPAFG) threads the bilayer. Glu-240 is a Zn(2+) binding site. A helical transmembrane segment spans residues 256-272 (VVVSVLMKLAGGCPSIA).

Belongs to the peptidase M48 family. M48D subfamily. Interacts with plastoglobule (PG) core proteins ABC1K3, PES1 and CCD4. Requires Zn(2+) as cofactor. Mostly expressed in flowers (e.g. sepals, petals and stamen), seeds, leaves and cotyledons.

The protein localises to the plastid. The protein resides in the chloroplast. It localises to the plastoglobule. Its subcellular location is the chloroplast membrane. In terms of biological role, metalloendopeptidase with a Zn-dependent proteolytic activity and substrate cleavage upstream of hydrophobic residues. Positive regulator of senescence, probably by degrading CCD4, thus participating in the controlled removal of carotenoids from the thylakoid membrane during the senescence process. This Arabidopsis thaliana (Mouse-ear cress) protein is Plastoglobule-localized metallopeptidase 48, chloroplastic.